The sequence spans 634 residues: Chaperone protein DnaK 2 (634 aa).

Phosphothreonine; by autocatalysis is present on T197. The segment covering 600-620 (ASAEASANAQAGPSSSSSSSS) has biased composition (low complexity). Positions 600-634 (ASAEASANAQAGPSSSSSSSSGDDDVIDAEFSESK) are disordered. Over residues 621–634 (GDDDVIDAEFSESK) the composition is skewed to acidic residues.

It belongs to the heat shock protein 70 family.

Acts as a chaperone. The sequence is that of Chaperone protein DnaK 2 from Synechococcus sp. (strain ATCC 27144 / PCC 6301 / SAUG 1402/1) (Anacystis nidulans).